The primary structure comprises 695 residues: Segment polarity protein dishevelled homolog DVL-1 (695 aa).

Residues 1–85 enclose the DIX domain; that stretch reads MAETKIIYHM…RVVSWLVLAE (85 aa). Residues 89-235 are disordered; it reads SDAGSQGTDS…QRLRQTDRAS (147 aa). Positions 142–151 are enriched in basic residues; the sequence is SHRRERARRR. Over residues 152-171 the composition is skewed to basic and acidic residues; it reads NRDEAARTNGHPRGDRRRDL. A compositionally biased stretch (low complexity) spans 177–192; the sequence is SASTVLSSELESSSFI. Ser194 carries the phosphoserine modification. The span at 201–214 shows a compositional bias: low complexity; the sequence is SRLSSSTEQSTSSR. Over residues 215 to 228 the composition is skewed to basic residues; sequence LVRKHKCRRRKQRL. Residues 251–323 form the PDZ domain; sequence TVTLNMERHH…NDDAVRVLRE (73 aa). In terms of domain architecture, DEP spans 425–499; sequence PDSGLEIRDR…SEQCYYVFGD (75 aa). The span at 559–580 shows a compositional bias: low complexity; it reads SCGSGSAGSQQSEGSKSSGSTR. Positions 559 to 641 are disordered; that stretch reads SCGSGSAGSQ…SQASAVAPGL (83 aa). Polar residues predominate over residues 622–635; sequence SQLSRGSSPRSQAS.

Belongs to the DSH family. In terms of assembly, interacts with CXXC4. Interacts (via PDZ domain) with TMEM88. Interacts with BRD7 and INVS. Interacts (via PDZ domain) with VANGL1 and VANGL2 (via C-terminus). Interacts (via PDZ domain) with NXN. Interacts with ARRB1; the interaction is enhanced by phosphorylation of DVL1. Interacts with CYLD. Interacts (via PDZ domain) with RYK. Self-associates (via DIX domain) and forms higher homooligomers. Interacts (via PDZ domain) with DACT1 and FZD7, where DACT1 and FZD7 compete for the same binding site. Interacts (via DEP domain) with MUSK; the interaction is direct and mediates the formation a DVL1, MUSK and PAK1 ternary complex involved in AChR clustering. Interacts with DCDC2. Interacts with FOXK2. Interacts with PKD1 (via extracellular domain). Interacts (via PDZ domain) with CCDC88C/DAPLE; competes with CCDC88C for binding to frizzled receptor FZD7 and dissociates from CCDC88C following initiation of non-canonical Wnt signaling when CCDC88C displaces DVL1 from ligand-activated FZD7. In terms of processing, ubiquitinated; undergoes both 'Lys-48'-linked ubiquitination, leading to its subsequent degradation by the ubiquitin-proteasome pathway, and 'Lys-63'-linked ubiquitination. The interaction with INVS is required for ubiquitination. Deubiquitinated by CYLD, which acts on 'Lys-63'-linked ubiquitin chains. As to expression, high levels are seen in the brain, testis and kidney, lower levels in the ovary, breast, muscle, liver and small intestine, and very low levels are seen in the spleen and thymus. A moderate level expression is seen in the heart.

Its subcellular location is the cell membrane. The protein resides in the cytoplasm. The protein localises to the cytosol. It is found in the cytoplasmic vesicle. Participates in Wnt signaling by binding to the cytoplasmic C-terminus of frizzled family members and transducing the Wnt signal to down-stream effectors. Plays a role both in canonical and non-canonical Wnt signaling. Plays a role in the signal transduction pathways mediated by multiple Wnt genes. Required for LEF1 activation upon WNT1 and WNT3A signaling. DVL1 and PAK1 form a ternary complex with MUSK which is important for MUSK-dependent regulation of AChR clustering during the formation of the neuromuscular junction (NMJ). This Mus musculus (Mouse) protein is Segment polarity protein dishevelled homolog DVL-1 (Dvl1).